The sequence spans 781 residues: Chloride channel protein CLC-f (781 aa).

2 disordered regions span residues 1–41 and 79–98; these read MSSG…QSPA and RERH…EEDG. Basic and acidic residues predominate over residues 10 to 20; it reads NEDRHLLRSTD. A run of 12 helical transmembrane segments spans residues 129–149, 184–204, 221–241, 250–270, 279–299, 314–334, 350–370, 388–408, 433–453, 457–477, 502–522, and 523–543; these read WALL…VAGF, ILLI…LLEI, FLAG…LGTG, SVDI…NNRE, GAAS…FFAI, FTTA…NALL, AAEL…SVVF, FGLP…IIAL, APGI…TALC, GLVG…GAVF, ALVG…TSVL, and LLFE…AVGL. A disordered region spans residues 553–584; that stretch reads QGKESDSSEGRSTGRGYSSLSPSERKTEGVWR. Positions 575 to 584 are enriched in basic and acidic residues; the sequence is SERKTEGVWR. CBS domains follow at residues 621–677 and 699–763; these read MSKN…NAST and QERG…EMSR. The helical transmembrane segment at 726-746 threads the bilayer; that stretch reads QLPVVKRGEVIHKGKRRKLLG.

Belongs to the chloride channel (TC 2.A.49) family. As to quaternary structure, homodimer.

Its subcellular location is the membrane. Functionally, voltage-gated chloride channel. The protein is Chloride channel protein CLC-f (CLC-F) of Arabidopsis thaliana (Mouse-ear cress).